The sequence spans 67 residues: Large ribosomal subunit protein bL35 (67 aa).

The protein belongs to the bacterial ribosomal protein bL35 family.

The polypeptide is Large ribosomal subunit protein bL35 (Rhizobium etli (strain CIAT 652)).